We begin with the raw amino-acid sequence, 477 residues long: Protoporphyrinogen oxidase (477 aa).

FAD is bound by residues 9–14 (GGGISG), W42, 57–60 (GPRG), V257, A449, and 454–456 (VAV).

The protein belongs to the protoporphyrinogen/coproporphyrinogen oxidase family. Protoporphyrinogen oxidase subfamily. Monomer. Homodimer. The cofactor is FAD.

It localises to the mitochondrion inner membrane. The catalysed reaction is protoporphyrinogen IX + 3 O2 = protoporphyrin IX + 3 H2O2. Its pathway is porphyrin-containing compound metabolism; protoporphyrin-IX biosynthesis; protoporphyrin-IX from protoporphyrinogen-IX: step 1/1. Inhibited by acifluorfen. Functionally, catalyzes the 6-electron oxidation of protoporphyrinogen-IX to form protoporphyrin-IX. This chain is Protoporphyrinogen oxidase (Ppox), found in Mus musculus (Mouse).